Consider the following 161-residue polypeptide: Abscisic acid receptor PYL11 (161 aa).

The START-like stretch occupies residues 3–154; the sequence is TSQKYHTCGS…NLKSLAKLSE (152 aa). Abscisate-binding positions include Lys39, 68-73, 95-101, and Glu119; these read AEFSRE and RLVNYRS. The short motif at 64-68 is the Gate loop element; the sequence is SGLPA. Positions 94-96 match the Latch loop motif; it reads HRL.

It belongs to the PYR/PYL/RCAR abscisic acid intracellular receptor family. In terms of assembly, homodimer. Binds ABA on one subunit only. Interacts with PP2Cs. Binds to CARs protein in an ABA-independent manner, both at the plasma membrane and in the nucleus. Interacts with I-2 and TOPP1.

It is found in the cytoplasm. The protein localises to the nucleus. The protein resides in the cell membrane. Receptor for abscisic acid (ABA) required for ABA-mediated responses such as stomatal closure and germination inhibition. Inhibits the activity of group-A protein phosphatases type 2C (PP2Cs) when activated by ABA. Suppresses the phosphatase activity of TOPP1 in a dose-dependent manner in vitro. The protein is Abscisic acid receptor PYL11 (PYL11) of Arabidopsis thaliana (Mouse-ear cress).